Here is a 396-residue protein sequence, read N- to C-terminus: NADH-quinone oxidoreductase subunit D (396 aa).

It belongs to the complex I 49 kDa subunit family. NDH-1 is composed of 14 different subunits. Subunits NuoB, C, D, E, F, and G constitute the peripheral sector of the complex.

The protein localises to the cell inner membrane. It carries out the reaction a quinone + NADH + 5 H(+)(in) = a quinol + NAD(+) + 4 H(+)(out). NDH-1 shuttles electrons from NADH, via FMN and iron-sulfur (Fe-S) centers, to quinones in the respiratory chain. The immediate electron acceptor for the enzyme in this species is believed to be ubiquinone. Couples the redox reaction to proton translocation (for every two electrons transferred, four hydrogen ions are translocated across the cytoplasmic membrane), and thus conserves the redox energy in a proton gradient. The protein is NADH-quinone oxidoreductase subunit D of Brucella abortus (strain S19).